The chain runs to 864 residues: DNA mismatch repair protein MutS (864 aa).

Position 621-628 (621-628) interacts with ATP; that stretch reads GPNMGGKS. The tract at residues 804–833 is disordered; that stretch reads ETGKPESPAPVASRSSKPSMQADMFAEPQP.

Belongs to the DNA mismatch repair MutS family.

Its function is as follows. This protein is involved in the repair of mismatches in DNA. It is possible that it carries out the mismatch recognition step. This protein has a weak ATPase activity. The chain is DNA mismatch repair protein MutS from Teredinibacter turnerae (strain ATCC 39867 / T7901).